The sequence spans 167 residues: METSLRYATNSRSLKIHAKEKFPVNSKTRLQLHGELDTGAGVPSYFCAMIRYFFHEASTNLGVGLHYDKREKLRCLVRGKKKFPVITDEVVTFNIKGRCDFDQDLVQRNAKGAAEFDWNIWKFQKDQDLRLRIGYEMFEKVPYMQIRENNWTFNTNLKGKWNVRYDL.

Topologically, residues 1–21 (METSLRYATNSRSLKIHAKEK) are cytoplasmic. A beta stranded membrane pass occupies residues 22–31 (FPVNSKTRLQ). Over 32-55 (LHGELDTGAGVPSYFCAMIRYFFH) the chain is Chloroplast intermembrane. Residues 56–65 (EASTNLGVGL) form a beta stranded membrane-spanning segment. At 66–71 (HYDKRE) the chain is on the cytoplasmic side. A beta stranded transmembrane segment spans residues 72–81 (KLRCLVRGKK). Residues 82–87 (KFPVIT) lie on the Chloroplast intermembrane side of the membrane. The beta stranded transmembrane segment at 88 to 97 (DEVVTFNIKG) threads the bilayer. At 98–110 (RCDFDQDLVQRNA) the chain is on the cytoplasmic side. The chain crosses the membrane as a beta stranded span at residues 111 to 120 (KGAAEFDWNI). The Chloroplast intermembrane portion of the chain corresponds to 121 to 127 (WKFQKDQ). A beta stranded membrane pass occupies residues 128–137 (DLRLRIGYEM). Topologically, residues 138-142 (FEKVP) are cytoplasmic. Residues 143–152 (YMQIRENNWT) traverse the membrane as a beta stranded segment. Topologically, residues 153 to 158 (FNTNLK) are chloroplast intermembrane. Residues 159-167 (GKWNVRYDL) form a beta stranded membrane-spanning segment.

This sequence belongs to the plastid outer envelope porin OEP21 (TC 1.B.29) family.

It is found in the plastid. Its subcellular location is the etioplast membrane. The protein localises to the chloroplast outer membrane. In terms of biological role, voltage-dependent rectifying anion channel that facilitates the translocation between chloroplast and cytoplasm of phosphorylated carbohydrates such as triosephosphate, 3-phosphoglycerate and inorganic phosphate (Pi) depending of ATP to triosephosphate ratio in the plastidial intermembrane space; in high triosephosphate/ATP conditions (e.g. photosynthesis), export of triosphosphate from chloroplast (outward rectifying channels), but in high ATP/triosephosphate conditions (e.g. dark phase), import of phosphosolutes (inward rectifying channels). The polypeptide is Outer envelope pore protein 21A, chloroplastic (OEP21A) (Arabidopsis thaliana (Mouse-ear cress)).